We begin with the raw amino-acid sequence, 1322 residues long: Serine/threonine-protein kinase TIO (1322 aa).

The 251-residue stretch at 6–256 (YHVIELVGEG…WPALREHPFV (251 aa)) folds into the Protein kinase domain. ATP contacts are provided by residues 12–20 (VGEGSFGRV) and Lys35. Asp127 acts as the Proton acceptor in catalysis. The segment at 1000–1322 (CMEDRDLLKA…VIVAKVSGES (323 aa)) is required for the binding to Kinesin-12 members. 6 ARM repeats span residues 1056–1098 (PRLA…DLSR), 1101–1140 (KAFYKYIGEASVLQPLKEYLTHVDPNIRAKACSALGNMCR), 1143–1182 (GYFYSALAEHQIIGLLIDRCADPDKRTQKFACFAIGNAAY), 1183–1223 (HNDT…NLVR), 1226–1273 (NKLC…LFSL), and 1281–1320 (QICRQFVKSSELFPVIARLKQSPEANIAHYASVIVAKVSG).

Belongs to the protein kinase superfamily. Ser/Thr protein kinase family. In terms of assembly, interacts with Kinesin-12 members KIN12A/PAKRP1 and KIN12B/PAKRP1L. Interacts with KIN7B/NACK2. As to expression, ubiquitous.

The protein resides in the cytoplasm. It is found in the cytoskeleton. It localises to the phragmoplast. The enzyme catalyses L-seryl-[protein] + ATP = O-phospho-L-seryl-[protein] + ADP + H(+). It carries out the reaction L-threonyl-[protein] + ATP = O-phospho-L-threonyl-[protein] + ADP + H(+). Plays a role in conventional modes of cytokinesis in meristems and during male gametogenesis but also acts in nonconventional modes of cytokinesis (cellularization) during female gametogenesis. Constitutes a signaling module in association with Kinesin-12 members that is required to support phragmoplast expansion and cell-plate growth in plant cells. This is Serine/threonine-protein kinase TIO (TIO) from Arabidopsis thaliana (Mouse-ear cress).